We begin with the raw amino-acid sequence, 405 residues long: Putative arsenical pump-driving ATPase (405 aa).

8-15 (GKGGVGKT) lines the ATP pocket.

This sequence belongs to the arsA ATPase family.

It carries out the reaction arsenite(in) + ATP + H2O = arsenite(out) + ADP + phosphate + H(+). Its function is as follows. Anion-transporting ATPase. Catalyzes the extrusion of arsenite. The sequence is that of Putative arsenical pump-driving ATPase from Chlorobaculum tepidum (strain ATCC 49652 / DSM 12025 / NBRC 103806 / TLS) (Chlorobium tepidum).